A 428-amino-acid polypeptide reads, in one-letter code: NADP-specific glutamate dehydrogenase (428 aa).

Lys68 and Lys92 together coordinate substrate. Catalysis depends on Lys104, which acts as the Proton donor. 2 residues coordinate NADP(+): Thr188 and Asn219. Ser356 serves as a coordination point for substrate.

It belongs to the Glu/Leu/Phe/Val dehydrogenases family. As to quaternary structure, homohexamer.

It catalyses the reaction L-glutamate + NADP(+) + H2O = 2-oxoglutarate + NH4(+) + NADPH + H(+). In terms of biological role, catalyzes the reversible oxidative deamination of glutamate to alpha-ketoglutarate and ammonia. The sequence is that of NADP-specific glutamate dehydrogenase (gdhA) from Synechocystis sp. (strain ATCC 27184 / PCC 6803 / Kazusa).